The following is a 537-amino-acid chain: Leucine-rich repeat LGI family member 4 (537 aa).

The N-terminal stretch at 1–19 is a signal peptide; sequence MGGAGILLFLLAWAGAGVA. 4 LRR repeats span residues 53–74, 77–98, 101–122, and 125–146; these read TLLSLSLVRMGVSRLKAGSFLK, SLHLLLFTSNTFSVIEGDAFIG, YLQYLFIEDNKIGSISKNALRG, and SLTHLSLANNHLEALPRFLFRG. An LRRCT domain is found at 158–208; it reads NPFQCDCRVLWLLQWMPTVNASVGTGACAGPPAVAQIQLNHLDPKKFKCRA. Asn177 is a glycosylation site (N-linked (GlcNAc...) asparagine). EAR repeat units lie at residues 210-252, 256-298, 302-349, 351-394, 396-439, 441-483, and 487-532; these read ELSW…VWDY, RFRP…SRSS, RLTP…CRDG, GFYP…HWVG, RFER…RWDG, MFRL…RFES, and ILEP…QHHE.

As to quaternary structure, can bind to ADAM11, ADAM22 and ADAM23. Brain. Expressed in the entire developing peripheral nerves. Strongly expressed in the trigeminal nerve and ganglion and particularly abundant in the boundary cap cells - a transient population of cells that contributes to the Schwann cell population of the dorsal root nerve.

The protein localises to the secreted. Functionally, component of Schwann cell signaling pathway(s) that controls axon segregation and myelin formation. The chain is Leucine-rich repeat LGI family member 4 (Lgi4) from Mus musculus (Mouse).